The chain runs to 921 residues: Translation initiation factor IF-2 (921 aa).

Residues 1–296 form a disordered region; the sequence is MADQNTPGDK…PGPQKQRGRL (296 aa). The span at 80 to 89 shows a compositional bias: low complexity; it reads RPSGPRPSGG. The span at 117 to 183 shows a compositional bias: basic and acidic residues; sequence ARVRDLEERR…AKKRFGEGEA (67 aa). Low complexity-rich tracts occupy residues 184–237 and 248–257; these read PRPA…ARPA and GRAPAAVAAG. Residues 417-586 form the tr-type G domain; it reads PRSPVVTVMG…MIALQADILD (170 aa). A G1 region spans residues 426–433; sequence GHVDHGKT. 426 to 433 contributes to the GTP binding site; sequence GHVDHGKT. The interval 451–455 is G2; that stretch reads GITQH. The segment at 474–477 is G3; that stretch reads DTPG. GTP contacts are provided by residues 474–478 and 528–531; these read DTPGH and NKID. The tract at residues 528-531 is G4; sequence NKID. The G5 stretch occupies residues 564 to 566; sequence SAK.

This sequence belongs to the TRAFAC class translation factor GTPase superfamily. Classic translation factor GTPase family. IF-2 subfamily.

It localises to the cytoplasm. Its function is as follows. One of the essential components for the initiation of protein synthesis. Protects formylmethionyl-tRNA from spontaneous hydrolysis and promotes its binding to the 30S ribosomal subunits. Also involved in the hydrolysis of GTP during the formation of the 70S ribosomal complex. The protein is Translation initiation factor IF-2 of Bradyrhizobium sp. (strain ORS 278).